Reading from the N-terminus, the 463-residue chain is Perilipin-5 (463 aa).

The tract at residues 1–108 (MSEEEAAQIP…KLEEKLPFLQ (108 aa)) is interaction with LIPE. Positions 1–173 (MSEEEAAQIP…HFLPMTEEEL (173 aa)) are essential for lipid droplet targeting. Residues Ser2, Ser148, and Ser322 each carry the phosphoserine modification. The interval 185 to 463 (VGSVEDQRRQ…KHTLMPELDF (279 aa)) is interaction with PNPLA2 and ABHD5. The tract at residues 444–463 (QEPETPSCPVKHTLMPELDF) is recruits mitochondria at the lipid droplet surface.

This sequence belongs to the perilipin family. In terms of assembly, homooligomer. Interacts with PNPLA2; prevents interaction of PNPLA2 with ABHD5. Interacts with ABHD5; targets ABHD5 to lipid droplets and promotes interaction of ABHD5 with PNPLA2. Interacts with LIPE. In terms of processing, phosphorylated by PKA. Phosphorylated on serine in skeletal muscle at rest or upon lipolytic stimulation. Expressed in skeletal muscle, liver, heart and kidney.

It localises to the lipid droplet. The protein localises to the cytoplasm. The protein resides in the mitochondrion. Lipid droplet-associated protein that maintains the balance between lipogenesis and lipolysis and also regulates fatty acid oxidation in oxidative tissues. Recruits mitochondria to the surface of lipid droplets and is involved in lipid droplet homeostasis by regulating both the storage of fatty acids in the form of triglycerides and the release of fatty acids for mitochondrial fatty acid oxidation. In lipid droplet triacylglycerol hydrolysis, plays a role as a scaffolding protein for three major key lipolytic players: ABHD5, PNPLA2 and LIPE. Reduces the triacylglycerol hydrolase activity of PNPLA2 by recruiting and sequestering PNPLA2 to lipid droplets. Phosphorylation by PKA enables lipolysis probably by promoting release of ABHD5 from the perilipin scaffold and by facilitating interaction of ABHD5 with PNPLA2. Also increases lipolysis through interaction with LIPE and upon PKA-mediated phosphorylation of LIPE. In Homo sapiens (Human), this protein is Perilipin-5 (PLIN5).